The chain runs to 151 residues: Decarboxylase nsrE (151 aa).

The region spanning 31–126 (AGMTEEDYHN…VGDHENFADT (96 aa)) is the EthD domain.

It belongs to the tpcK family.

It carries out the reaction atrochrysone carboxylate + H(+) = atrochrysone + CO2. It participates in secondary metabolite biosynthesis. Its function is as follows. Decarboxylase; part of the gene cluster that mediates the biosynthesis of the tetrahydroxanthone dimer neosartorin, which exhibits antibacterial activity. The two different monomeric units appear to be synthesized by the same set of enzymes, among which the Baeyer-Villiger monooxygenase nsrF is the key enzyme for the divergence of the biosynthetic routes. The pathway begins with the synthesis of atrochrysone thioester by the polyketide synthase nsrB. The atrochrysone carboxyl ACP thioesterase nsrC then breaks the thioester bond and releases the atrochrysone carboxylic acid from AacuL. Atrochrysone carboxylic acid is decarboxylated by the decarboxylase nsrE, and oxidized by the anthrone oxygenase nsrD to yield emodin. Emodin is then reduced to emodin hydroquinone by the oxidoreductase nsrR. A-ring reduction by the short chain dehydrogenase nsrJ, dehydration by the scytalone dehydratase-like protein nsrI and probable spontaneous re-oxidation, results in overall deoxygenation to chrysophanol. The Baeyer-Villiger monooxygenase nsrF accepts chrysophanol as a substrate to insert one oxygen atom at two different positions to yield the precursors of both monomric units. NsrF is promiscuous/flexible in interacting with the 2 (non methylated and methylated) aromatic rings of chrysophanol, thus diverging the biosynthetic pathway at this point. After the hydrolysis of the lactones, methylesterification by the methyltransferase nsrG yields respectively moniliphenone and 2,2',6'-trihydroxy-4-methyl-6-methoxya-cyldiphenylmethanone. The next steps are the hydroxylation by the FAD-dependent monooxygenase nsrK, followed by isomerization by the monooxygenase nsrQ. The short chain dehydrogenase/reductase nsrO then catalyzes the C-5 ketoreduction to give the xanthone skeleton of blennolide C and 5-acetylblennolide A. The acetyltransferase nsrL has a strict substrate specificity and uses only blennolide A but not blennolide C to yield 5-acetylblennolide A as the single-acetylated product. In the final step of the biosynthesis, the heterodimerization of the 2 xanthones, blennolide C and 5-acetylblennolide A, is catalyzed by the cytochrome P450 monooxygenase nsrP. NsrP can utilize at least three different xanthones as its substrates to perform the dimerization reaction. This is Decarboxylase nsrE from Aspergillus novofumigatus (strain IBT 16806).